Consider the following 541-residue polypeptide: MLLKELAELAMRIASTSSRRDKVSLVSDLIRRSDPEEAYKALLILTGRIFPPSDPRELNVSWATLWKVVSSLSGAEPTGVDAGELVKSIVERRGKRQTALLEEPLTVEEVYKILEAISEAEGPGSKGKREALLTIPFSRADPSEAWLLANAIVGETRLGLNEGLLIESIAQAYGLRKEDVERAVMVLGDPYEIVRRGGKLEFEPVLFRPLKPMLAQSSDSLRSAIEELGRCALEYKLDGVRVQVHKRGDEVRFFSRRMSDITKSLPDVSDQVRYGVRAGEAILEGELIAERDGRPLPFQILIRRFKRRQLDPRLIEEIPLKLYIFDLILLDGSSYLRKPYFERREKLEGLIEDPVSLVRSLITSDPDEGMDFMEEALREGHEGVIAKKLNSPYIPGVRGRYWLKVKETNSLDLVIVAAERGYGRRHRWYSDYYLAARDPESGEFLIVGKTFKGLTDEEFEWITQKLEELSIGKEGKLIRVRPRIVVEVSFNEIQRSPKYKSGFALRFARITRIRDDKSPEEADTIERVREIYEKQIRKFQL.

E234 contributes to the ATP binding site. Residue K236 is the N6-AMP-lysine intermediate of the active site. ATP is bound by residues R241, R256, E286, F325, R398, and K404.

Belongs to the ATP-dependent DNA ligase family. Mg(2+) is required as a cofactor.

The enzyme catalyses ATP + (deoxyribonucleotide)n-3'-hydroxyl + 5'-phospho-(deoxyribonucleotide)m = (deoxyribonucleotide)n+m + AMP + diphosphate.. Its function is as follows. DNA ligase that seals nicks in double-stranded DNA during DNA replication, DNA recombination and DNA repair. This chain is DNA ligase 1, found in Korarchaeum cryptofilum (strain OPF8).